The sequence spans 572 residues: Sialate:O-sulfotransferase 1 (572 aa).

Residues 1 to 14 (MAKPFFRLQKFLRR) are Cytoplasmic-facing. The helical; Signal-anchor for type II membrane protein transmembrane segment at 15–35 (TQFLLLFLTAAYLMTGSLLLL) threads the bilayer. Over 36-572 (QRARVALPQA…AGLPREYVPR (537 aa)) the chain is Extracellular. Asn105 carries an N-linked (GlcNAc...) asparagine glycan. WSC domains are found at residues 139 to 231 (RGNY…YSVG) and 242 to 337 (TATY…DTRC). Asn254 carries an N-linked (GlcNAc...) asparagine glycan.

This sequence belongs to the WSCD family.

It is found in the golgi apparatus membrane. The catalysed reaction is a ganglioside GM1b + 3'-phosphoadenylyl sulfate = an 8-O-sulfo-ganglioside GM1b + adenosine 3',5'-bisphosphate + H(+). Its function is as follows. Sialate:O-sulfotransferase which catalyzes 8-O-sulfation at the Sia-glycan level using 3'-phosphoadenosine 5'-phosphosulfate (PAPS) as a donor, forming 8-O-sulfated Sia (Sia8S)-glycans. Displays selectivity toward glycolipids such as GM1 gangliosides. In Mus musculus (Mouse), this protein is Sialate:O-sulfotransferase 1 (Wscd1).